Here is a 623-residue protein sequence, read N- to C-terminus: Endoglucanase 12 (623 aa).

Residues 1–73 (MYSANHWGGS…LGCVVVKRKL (73 aa)) are Cytoplasmic-facing. The chain crosses the membrane as a helical; Signal-anchor for type II membrane protein span at residues 74–94 (LWWVLWTLLAAFILIGLPVII). The Extracellular segment spans residues 95-623 (AKSIPKKKPH…TPPPPSKWKP (529 aa)). Catalysis depends on Asp-166, which acts as the Nucleophile. N-linked (GlcNAc...) asparagine glycans are attached at residues Asn-217, Asn-236, Asn-324, Asn-345, Asn-408, and Asn-425. Catalysis depends on residues His-513, Asp-561, and Glu-570.

This sequence belongs to the glycosyl hydrolase 9 (cellulase E) family. Ubiquitous.

Its subcellular location is the membrane. The catalysed reaction is Endohydrolysis of (1-&gt;4)-beta-D-glucosidic linkages in cellulose, lichenin and cereal beta-D-glucans.. This is Endoglucanase 12 (GLU3) from Oryza sativa subsp. japonica (Rice).